A 58-amino-acid chain; its full sequence is Large ribosomal subunit protein bL32 (58 aa).

The protein belongs to the bacterial ribosomal protein bL32 family.

This Caldicellulosiruptor bescii (strain ATCC BAA-1888 / DSM 6725 / KCTC 15123 / Z-1320) (Anaerocellum thermophilum) protein is Large ribosomal subunit protein bL32.